The sequence spans 476 residues: MSTIKKLYIKTWGCQMNEYDSSKMADLLESTHGYQLTDVAEEADILLLNTCSIREKAQEKVFHQLGRWKNLKDTNPDLIIGVGGCVASQEGDFIRQRAQCVDIIFGPQTLHRLPEMINQVKGTRSPVVDISFPEIEKFDRLPEPRAEGPSAFVSIMEGCNKYCTFCVVPYTRGEEVSRPCDDVLFEIAQLAAQGVREVNLLGQNVNAYRGATYDGDICSFAELIRLVAAIDGIDRIRFTTSHPIEFTDDIIAVYEDTPELVSFLHLPVQSGSDRILTLMKRAHTALEYKSIIRKLRKARPDILISSDFIIGFPGETQDDFEKTMKLIADVNFDMSYSFIYSARPGTPAADLPDDVSEEEKKQRLYLLQQRINQQAMSYSRAMLGSVQRILVEGTSRKNVMELSGRTENNRVVNFEGQPDMIGKFVDVEIVDVYANSLRGKVIRTEDQMDLRIHESPESVIARTRKEDEIGVGTYQP.

The MTTase N-terminal domain maps to 5 to 122 (KKLYIKTWGC…LPEMINQVKG (118 aa)). Residues Cys14, Cys51, Cys85, Cys159, Cys163, and Cys166 each contribute to the [4Fe-4S] cluster site. One can recognise a Radical SAM core domain in the interval 145–377 (RAEGPSAFVS…QQRINQQAMS (233 aa)). The 64-residue stretch at 380–443 (RAMLGSVQRI…ANSLRGKVIR (64 aa)) folds into the TRAM domain.

It belongs to the methylthiotransferase family. MiaB subfamily. In terms of assembly, monomer. Requires [4Fe-4S] cluster as cofactor.

It is found in the cytoplasm. The enzyme catalyses N(6)-dimethylallyladenosine(37) in tRNA + (sulfur carrier)-SH + AH2 + 2 S-adenosyl-L-methionine = 2-methylsulfanyl-N(6)-dimethylallyladenosine(37) in tRNA + (sulfur carrier)-H + 5'-deoxyadenosine + L-methionine + A + S-adenosyl-L-homocysteine + 2 H(+). Functionally, catalyzes the methylthiolation of N6-(dimethylallyl)adenosine (i(6)A), leading to the formation of 2-methylthio-N6-(dimethylallyl)adenosine (ms(2)i(6)A) at position 37 in tRNAs that read codons beginning with uridine. The polypeptide is tRNA-2-methylthio-N(6)-dimethylallyladenosine synthase (Photorhabdus laumondii subsp. laumondii (strain DSM 15139 / CIP 105565 / TT01) (Photorhabdus luminescens subsp. laumondii)).